A 454-amino-acid chain; its full sequence is Notoamide E oxidase notB (454 aa).

A helical membrane pass occupies residues 15–35 (SPAELTVIIVGLGIAGLTAAI). Positions 48 and 61 each coordinate FAD. Residue Asn75 is glycosylated (N-linked (GlcNAc...) asparagine). Arg121 provides a ligand contact to FAD. Catalysis depends on residues Arg199 and Tyr229. Residues Asp322 and Gly335 each coordinate FAD.

Belongs to the paxM FAD-dependent monooxygenase family. It depends on FAD as a cofactor.

It localises to the membrane. It carries out the reaction notoamide E + NADPH + O2 + H(+) = notoamide C + NADP(+) + H2O. The enzyme catalyses notoamide E + NADPH + O2 + H(+) = notoamide D + NADP(+) + H2O. It participates in alkaloid biosynthesis. In terms of biological role, FAD-dependent monooxygenase; part of the gene cluster that mediates the biosynthesis of notoamide, a fungal indole alkaloid that belongs to a family of natural products containing a characteristic bicyclo[2.2.2]diazaoctane core. The first step of notoamide biosynthesis involves coupling of L-proline and L-tryptophan by the bimodular NRPS notE, to produce cyclo-L-tryptophan-L-proline called brevianamide F. The reverse prenyltransferase notF then acts as a deoxybrevianamide E synthase and converts brevianamide F to deoxybrevianamide E via reverse prenylation at C-2 of the indole ring leading to the bicyclo[2.2.2]diazaoctane core. Deoxybrevianamide E is further hydroxylated at C-6 of the indole ring, likely catalyzed by the cytochrome P450 monooxygenase notG, to yield 6-hydroxy-deoxybrevianamide E. 6-hydroxy-deoxybrevianamide E is a specific substrate of the prenyltransferase notC for normal prenylation at C-7 to produce 6-hydroxy-7-prenyl-deoxybrevianamide, also called notoamide S. As the proposed pivotal branching point in notoamide biosynthesis, notoamide S can be diverted to notoamide E through an oxidative pyran ring closure putatively catalyzed by either notH cytochrome P450 monooxygenase or the notD FAD-linked oxidoreductase. This step would be followed by an indole 2,3-epoxidation-initiated pinacol-like rearrangement catalyzed by the notB FAD-dependent monooxygenase leading to the formation of notoamide C and notoamide D. On the other hand notoamide S is converted to notoamide T by notH (or notD), a bifunctional oxidase that also functions as the intramolecular Diels-Alderase responsible for generation of (+)-notoamide T. To generate antipodal (-)-notoaminide T, notH' (or notD') in Aspergillus versicolor is expected to catalyze a Diels-Alder reaction leading to the opposite stereochemistry. The remaining oxidoreductase notD (or notH) likely catalyzes the oxidative pyran ring formation to yield (+)-stephacidin A. The FAD-dependent monooxygenase notI is highly similar to notB and is predicted to catalyze a similar conversion from (+)-stephacidin A to (-)-notoamide B via the 2,3-epoxidation of (+)-stephacidin A followed by a pinacol-type rearrangement. Finally, it remains unclear which enzyme could be responsible for the final hydroxylation steps leading to notoamide A and sclerotiamide. The protein is Notoamide E oxidase notB of Aspergillus sp. (strain MF297-2).